The sequence spans 326 residues: Alkanal monooxygenase beta chain (326 aa).

Belongs to the bacterial luciferase oxidoreductase family. As to quaternary structure, heterodimer of an alpha and a beta chain.

It carries out the reaction a long-chain fatty aldehyde + FMNH2 + O2 = a long-chain fatty acid + hnu + FMN + H2O + 2 H(+). In terms of biological role, light-emitting reaction in luminous bacteria. The specific role of the beta subunit is unknown, but it is absolutely required for bioluminescence activity. The chain is Alkanal monooxygenase beta chain (luxB) from Aliivibrio fischeri (Vibrio fischeri).